A 103-amino-acid chain; its full sequence is Histone H4.2 (103 aa).

A compositionally biased stretch (gly residues) spans Met1–Gly14. The tract at residues Met1 to Arg20 is disordered. At Lys6 the chain carries N6-acetyl-N6-methyllysine; alternate. N6-methyllysine; alternate is present on residues Lys6, Lys9, and Lys13. Lys13 carries the N6-acetyl-N6-methyllysine; alternate modification. Residues Lys17 to Lys21 mediate DNA binding. Lys92 is subject to N6-glutaryllysine.

Belongs to the histone H4 family. In terms of assembly, the nucleosome is a histone octamer containing two molecules each of H2A, H2B, H3 and H4 assembled in one H3-H4 heterotetramer and two H2A-H2B heterodimers. The octamer wraps approximately 147 bp of DNA. Glutarylation at Lys-92 (H4K91glu) destabilizes nucleosomes by promoting dissociation of the H2A-H2B dimers from nucleosomes.

Its subcellular location is the nucleus. The protein resides in the chromosome. In terms of biological role, core component of nucleosome. Nucleosomes wrap and compact DNA into chromatin, limiting DNA accessibility to the cellular machineries which require DNA as a template. Histones thereby play a central role in transcription regulation, DNA repair, DNA replication and chromosomal stability. DNA accessibility is regulated via a complex set of post-translational modifications of histones, also called histone code, and nucleosome remodeling. In Talaromyces funiculosus (Fruitlet core rot fungus), this protein is Histone H4.2 (H4.2).